Here is a 754-residue protein sequence, read N- to C-terminus: uncharacterized protein (754 aa).

Transmembrane regions (helical) follow at residues 3–23 (ITTV…LPQL), 24–44 (PGTL…FIPV), 50–70 (IALT…ILWA), 223–243 (HLMA…AGLI), 254–274 (WIHW…YAWL), 320–340 (VAIL…LIFW), 370–390 (LLLM…SFIA), 392–412 (LLAI…AMVV), 446–466 (WINI…LLVV), and 471–491 (AWRT…WPLW).

The protein to B.subtilis ComEC, N.gonorrhoeae ComA, and H.influenzae Rec2.

The protein resides in the cell membrane. This is an uncharacterized protein from Escherichia coli (strain K12).